Reading from the N-terminus, the 310-residue chain is Uracil phosphoribosyltransferase homolog (310 aa).

Disordered regions lie at residues 1–27 (MASE…PSPE) and 62–89 (SERD…GNYD). The span at 16-25 (RQVNSTSSPS) shows a compositional bias: polar residues. S25 carries the phosphoserine modification. Residues R134, R143, and 177-180 (EKGN) each bind GTP. 5-phospho-alpha-D-ribose 1-diphosphate is bound at residue R187. GTP contacts are provided by R204 and R233. 239 to 247 (YPILSTGNT) is a 5-phospho-alpha-D-ribose 1-diphosphate binding site. 300–302 (THF) contributes to the uracil binding site.

The protein belongs to the UPRTase family.

It localises to the cytoplasm. The protein localises to the nucleus. In Mus musculus (Mouse), this protein is Uracil phosphoribosyltransferase homolog (Uprt).